The following is a 132-amino-acid chain: Translation initiation factor 5A (132 aa).

A Hypusine modification is found at Lys36.

The protein belongs to the eIF-5A family.

It localises to the cytoplasm. Its function is as follows. Functions by promoting the formation of the first peptide bond. This is Translation initiation factor 5A (eIF5A) from Thermofilum pendens (strain DSM 2475 / Hrk 5).